The sequence spans 101 residues: Urease subunit beta (101 aa).

Belongs to the urease beta subunit family. In terms of assembly, heterotrimer of UreA (gamma), UreB (beta) and UreC (alpha) subunits. Three heterotrimers associate to form the active enzyme.

It localises to the cytoplasm. It carries out the reaction urea + 2 H2O + H(+) = hydrogencarbonate + 2 NH4(+). The protein operates within nitrogen metabolism; urea degradation; CO(2) and NH(3) from urea (urease route): step 1/1. The chain is Urease subunit beta from Dinoroseobacter shibae (strain DSM 16493 / NCIMB 14021 / DFL 12).